The chain runs to 288 residues: Elongation factor Ts (288 aa).

The involved in Mg(2+) ion dislocation from EF-Tu stretch occupies residues 82–85; that stretch reads TDFV.

Belongs to the EF-Ts family.

The protein resides in the cytoplasm. Functionally, associates with the EF-Tu.GDP complex and induces the exchange of GDP to GTP. It remains bound to the aminoacyl-tRNA.EF-Tu.GTP complex up to the GTP hydrolysis stage on the ribosome. This is Elongation factor Ts from Chlorobium phaeovibrioides (strain DSM 265 / 1930) (Prosthecochloris vibrioformis (strain DSM 265)).